We begin with the raw amino-acid sequence, 478 residues long: Cysteine--tRNA ligase (478 aa).

Cysteine 27 lines the Zn(2+) pocket. Positions 29-39 (PTTYNFIHLGN) match the 'HIGH' region motif. Zn(2+)-binding residues include cysteine 207, histidine 232, and glutamate 236. Positions 264–268 (KMSKS) match the 'KMSKS' region motif. Lysine 267 is an ATP binding site.

The protein belongs to the class-I aminoacyl-tRNA synthetase family. Monomer. Requires Zn(2+) as cofactor.

It is found in the cytoplasm. It catalyses the reaction tRNA(Cys) + L-cysteine + ATP = L-cysteinyl-tRNA(Cys) + AMP + diphosphate. In Desulforudis audaxviator (strain MP104C), this protein is Cysteine--tRNA ligase.